A 54-amino-acid polypeptide reads, in one-letter code: Large ribosomal subunit protein bL33 (54 aa).

The protein belongs to the bacterial ribosomal protein bL33 family.

The protein is Large ribosomal subunit protein bL33 of Herpetosiphon aurantiacus (strain ATCC 23779 / DSM 785 / 114-95).